The following is a 282-amino-acid chain: HTH-type transcriptional activator RhaR (282 aa).

An HTH araC/xylS-type domain is found at 179-277 (DKLITRLAAS…GMTPSQWRHL (99 aa)). DNA-binding regions (H-T-H motif) lie at residues 196 to 217 (DKFC…RQQT) and 244 to 267 (ISDI…TRET).

Binds DNA as a dimer.

The protein localises to the cytoplasm. Its function is as follows. Activates expression of the rhaSR operon in response to L-rhamnose. The chain is HTH-type transcriptional activator RhaR from Shigella flexneri serotype 5b (strain 8401).